The chain runs to 243 residues: UDP-2,3-diacylglucosamine hydrolase (243 aa).

Mn(2+)-binding residues include D8, H10, D41, N79, and H114. 79–80 serves as a coordination point for substrate; sequence NR. Substrate-binding residues include D122, K164, K167, and H195. 2 residues coordinate Mn(2+): H195 and H197.

Belongs to the LpxH family. It depends on Mn(2+) as a cofactor.

The protein resides in the cell inner membrane. It catalyses the reaction UDP-2-N,3-O-bis[(3R)-3-hydroxytetradecanoyl]-alpha-D-glucosamine + H2O = 2-N,3-O-bis[(3R)-3-hydroxytetradecanoyl]-alpha-D-glucosaminyl 1-phosphate + UMP + 2 H(+). It participates in glycolipid biosynthesis; lipid IV(A) biosynthesis; lipid IV(A) from (3R)-3-hydroxytetradecanoyl-[acyl-carrier-protein] and UDP-N-acetyl-alpha-D-glucosamine: step 4/6. Functionally, hydrolyzes the pyrophosphate bond of UDP-2,3-diacylglucosamine to yield 2,3-diacylglucosamine 1-phosphate (lipid X) and UMP by catalyzing the attack of water at the alpha-P atom. Involved in the biosynthesis of lipid A, a phosphorylated glycolipid that anchors the lipopolysaccharide to the outer membrane of the cell. This chain is UDP-2,3-diacylglucosamine hydrolase, found in Vibrio vulnificus (strain YJ016).